The sequence spans 1487 residues: Collagen alpha-1(II) chain (1487 aa).

The first 25 residues, 1–25, serve as a signal peptide directing secretion; sequence MIRLGAPQTLVLLTLLVAAVLRCHG. The propeptide at 26–181 is N-terminal propeptide; sequence QDVQKAGSCV…PPGLGGNFAA (156 aa). The VWFC domain occupies 32–90; that stretch reads GSCVQDGQRYNDKDVWKPEPCRICVCDTGTVLCDDIICEDMKDCLSPETPFGECCPICS. Positions 96-1234 are disordered; sequence ASGQPGPKGQ…GLGQREKGPD (1139 aa). 2 stretches are compositionally biased toward basic and acidic residues: residues 105 to 116 and 133 to 154; these read QKGEPGDIKDIV and PRGDRGDKGEKGAPGPRGRDGE. The segment covering 158–173 has biased composition (pro residues); that stretch reads PGNPGPPGPPGPPGPP. Lysine 190 is modified (5-hydroxylysine). Lysine 190 carries an O-linked (Gal...) hydroxylysine glycan. Positions 192–203 are enriched in low complexity; that stretch reads GGAQMGVMQGPM. The interval 201-1214 is triple-helical region; that stretch reads GPMGPMGPRG…PGPPGPPGPP (1014 aa). Residues 208 to 217 are compositionally biased toward pro residues; it reads PRGPPGPAGA. 12 positions are modified to hydroxyproline: proline 212, proline 218, proline 230, proline 233, proline 245, proline 248, proline 251, proline 260, proline 269, proline 278, proline 281, and proline 284. Residues 218-239 show a composition bias toward low complexity; it reads PGPQGFQGNPGEPGEPGVSGPM. Over residues 241 to 250 the composition is skewed to pro residues; that stretch reads PRGPPGPPGK. Residues 251–265 show a composition bias toward basic and acidic residues; the sequence is PGDDGEAGKPGKSGE. A 5-hydroxylysine modification is found at lysine 287. O-linked (Gal...) hydroxylysine glycosylation occurs at lysine 287. At proline 293 the chain carries Hydroxyproline. Residue lysine 299 is modified to 5-hydroxylysine. An O-linked (Gal...) hydroxylysine glycan is attached at lysine 299. A Hydroxyproline modification is found at proline 305. Lysine 308 carries the post-translational modification 5-hydroxylysine. An O-linked (Gal...) hydroxylysine glycan is attached at lysine 308. Over residues 310–320 the composition is skewed to low complexity; the sequence is ESGSPGENGSP. Proline 314, proline 320, proline 329, proline 350, proline 356, proline 365, proline 368, and proline 371 each carry hydroxyproline. Positions 335 to 350 are enriched in low complexity; it reads TGPAGAAGARGNDGQP. Residues 360 to 369 show a composition bias toward gly residues; the sequence is GPAGGPGFPG. 2 stretches are compositionally biased toward low complexity: residues 370 to 382 and 391 to 431; these read APGAKGEAGPTGA and PRGE…AGAP. Lysine 374 carries the 5-hydroxylysine modification. O-linked (Gal...) hydroxylysine glycosylation occurs at lysine 374. 5 positions are modified to hydroxyproline: proline 395, proline 398, proline 401, proline 410, and proline 416. 5-hydroxylysine is present on lysine 419. A hydroxyproline mark is found at proline 425, proline 431, proline 434, and proline 440. Positions 433–442 are enriched in pro residues; sequence FPGPRGPPGP. At lysine 452 the chain carries 5-hydroxylysine. Hydroxyproline is present on proline 458. Lysine 464 and lysine 470 each carry 5-hydroxylysine. Hydroxyproline is present on residues proline 473, proline 482, proline 497, proline 506, proline 512, and proline 518. Residue lysine 527 is modified to 5-hydroxylysine. Proline 530 carries the hydroxyproline modification. Position 542 is a 5-hydroxylysine (lysine 542). 8 positions are modified to hydroxyproline: proline 551, proline 557, proline 566, proline 581, proline 587, proline 590, proline 599, and proline 605. Residue lysine 608 is modified to 5-hydroxylysine. O-linked (Gal...) hydroxylysine glycosylation occurs at lysine 608. Proline 614 is subject to Hydroxyproline. Lysine 620 is modified (5-hydroxylysine). Lysine 620 carries O-linked (Gal...) hydroxylysine glycosylation. Residues 622-631 are compositionally biased toward low complexity; the sequence is LPGAPGLRGL. Hydroxyproline occurs at positions 623, 626, 632, 644, 659, and 668. Residues 656–667 are compositionally biased toward low complexity; the sequence is QGAPGPSGFQGL. Position 670 is a 3-hydroxyproline (proline 670). Hydroxyproline occurs at positions 671 and 674. Over residues 721 to 736 the composition is skewed to low complexity; it reads LPGTPGTDGPKGAAGP. Positions 764-775 are enriched in basic and acidic residues; the sequence is KGDRGDVGEKGP. Composition is skewed to low complexity over residues 833-848 and 877-913; these read AGFAGPPGADGQPGAK and PTGVTGPKGARGAQGPPGATGFPGAAGRVGPPGSNGN. A 3-hydroxyproline modification is found at proline 907. A 4-hydroxyproline mark is found at proline 908, proline 914, and proline 920. Over residues 1069-1079 the composition is skewed to pro residues; it reads APGPPGSPGPA. Residues 1091–1109 show a composition bias toward low complexity; it reads AGAQGPMGPAGPAGARGMP. Over residues 1115 to 1129 the composition is skewed to basic and acidic residues; that stretch reads RGDKGETGEAGERGL. A 5-hydroxylysine modification is found at lysine 1130. Residue lysine 1130 is glycosylated (O-linked (Gal...) hydroxylysine). At proline 1144 the chain carries 3-hydroxyproline. A compositionally biased stretch (low complexity) spans 1148 to 1157; the sequence is SGDQGASGPA. Proline 1181 is modified (4-hydroxyproline). A 3-hydroxyproline modification is found at proline 1186. Proline 1187 carries the post-translational modification 4-hydroxyproline. Residues 1199–1216 show a composition bias toward pro residues; that stretch reads AGPPGNPGPPGPPGPPGP. Residue proline 1201 is modified to 3-hydroxyproline. Residues proline 1202 and proline 1205 each carry the 4-hydroxyproline modification. 3-hydroxyproline is present on proline 1207. Residues proline 1208 and proline 1211 each carry the 4-hydroxyproline modification. Proline 1213 carries the 3-hydroxyproline modification. Position 1214 is a 4-hydroxyproline (proline 1214). The segment at 1215 to 1241 is nonhelical region (C-terminal); sequence GPGIDMSAFAGLGQREKGPDPLQYMRA. Positions 1253-1487 constitute a Fibrillar collagen NC1 domain; that stretch reads AEVDATLKSL…GVDIGPVCFL (235 aa). 3 disulfide bridges follow: cysteine 1283-cysteine 1315, cysteine 1323-cysteine 1485, and cysteine 1393-cysteine 1438. Ca(2+)-binding residues include aspartate 1301, asparagine 1303, glutamine 1304, cysteine 1306, and aspartate 1309. N-linked (GlcNAc...) asparagine glycosylation occurs at asparagine 1388.

Belongs to the fibrillar collagen family. In terms of assembly, homotrimers of alpha 1(II) chains. In terms of processing, probably 3-hydroxylated on prolines by LEPREL1. Proline residues at the third position of the tripeptide repeating unit (G-X-P) are hydroxylated in some or all of the chains. Proline residues at the second position of the tripeptide repeating unit (G-P-X) are hydroxylated in some of the chains. O-linked glycans consist of Glc-Gal disaccharides bound to the oxygen atom of post-translationally added hydroxyl groups. Post-translationally, contains mostly 4-hydroxyproline. Prolines at the third position of the tripeptide repeating unit (G-X-P) are 4-hydroxylated in some or all of the chains. In terms of processing, contains 3-hydroxyproline at a few sites. This modification occurs on the first proline residue in the sequence motif Gly-Pro-Hyp, where Hyp is 4-hydroxyproline. Lysine residues at the third position of the tripeptide repeating unit (G-X-Y) are 5-hydroxylated in some or all of the chains. Post-translationally, O-glycosylated on hydroxylated lysine residues. The O-linked glycan consists of a Glc-Gal disaccharide.

Its subcellular location is the secreted. It is found in the extracellular space. It localises to the extracellular matrix. In terms of biological role, type II collagen is specific for cartilaginous tissues. It is essential for the normal embryonic development of the skeleton, for linear growth and for the ability of cartilage to resist compressive forces. This Bos taurus (Bovine) protein is Collagen alpha-1(II) chain.